A 245-amino-acid chain; its full sequence is RAD51-like protein 1 (245 aa).

As to quaternary structure, interacts with brc-2 and rad-51.

The protein resides in the nucleus. Has a role in the homologous recombination repair (HRR) of genomic DNA during meiosis. Required for rad-51 recruitment onto ssDNA gaps generated at stalled replication fork barriers. This chain is RAD51-like protein 1 (rfs-1), found in Caenorhabditis elegans.